An 841-amino-acid chain; its full sequence is Microcephalin (841 aa).

Positions 1-93 (MAAPILKDVV…AHIDESLFPA (93 aa)) constitute a BRCT 1 domain. A phosphoserine mark is found at serine 278, serine 286, serine 295, and serine 332. Position 334 is a phosphothreonine (threonine 334). Disordered regions lie at residues 340–375 (GHLL…RKRS), 417–445 (PDNL…SCRS), 481–507 (SSPQ…SAPE), and 562–593 (VGLK…PRSV). Over residues 342-358 (LLIHSRPRSSSVKRKRV) the composition is skewed to basic residues. Over residues 433-445 (QLPSSPAQFSCRS) the composition is skewed to polar residues. Positions 565 to 583 (KSTQDKGTTSKISNSSEGE) are enriched in polar residues. BRCT domains lie at 646–736 (SGKG…SFEL) and 757–839 (YRGT…NYLL).

As to quaternary structure, interacts with CDC27 and maybe other components of the APC/C complex. Interacts with histone variant H2AX under DNA damage conditions.

It is found in the cytoplasm. It localises to the cytoskeleton. The protein localises to the microtubule organizing center. Its subcellular location is the centrosome. In terms of biological role, implicated in chromosome condensation and DNA damage induced cellular responses. May play a role in neurogenesis and regulation of the size of the cerebral cortex. The chain is Microcephalin from Colobus guereza (Mantled guereza).